The chain runs to 322 residues: Anthranilate phosphoribosyltransferase (322 aa).

5-phospho-alpha-D-ribose 1-diphosphate contacts are provided by residues Gly-71, 74–75, Thr-79, 81–84, 99–107, and Ala-111; these read GD, NVST, and KFGNRSASG. An anthranilate-binding site is contributed by Gly-71. Ser-83 is a binding site for Mg(2+). Position 102 (Asn-102) interacts with anthranilate. Arg-157 contributes to the anthranilate binding site. Residues Asp-215 and Glu-216 each contribute to the Mg(2+) site.

The protein belongs to the anthranilate phosphoribosyltransferase family. Homodimer. The cofactor is Mg(2+).

The catalysed reaction is N-(5-phospho-beta-D-ribosyl)anthranilate + diphosphate = 5-phospho-alpha-D-ribose 1-diphosphate + anthranilate. It participates in amino-acid biosynthesis; L-tryptophan biosynthesis; L-tryptophan from chorismate: step 2/5. Its function is as follows. Catalyzes the transfer of the phosphoribosyl group of 5-phosphorylribose-1-pyrophosphate (PRPP) to anthranilate to yield N-(5'-phosphoribosyl)-anthranilate (PRA). The sequence is that of Anthranilate phosphoribosyltransferase from Thermoplasma acidophilum (strain ATCC 25905 / DSM 1728 / JCM 9062 / NBRC 15155 / AMRC-C165).